We begin with the raw amino-acid sequence, 264 residues long: Hydroxyethylthiazole kinase (264 aa).

Substrate is bound at residue Met-41. Residues Lys-117 and Ser-163 each coordinate ATP. Gly-190 provides a ligand contact to substrate.

The protein belongs to the Thz kinase family. Requires Mg(2+) as cofactor.

The catalysed reaction is 5-(2-hydroxyethyl)-4-methylthiazole + ATP = 4-methyl-5-(2-phosphooxyethyl)-thiazole + ADP + H(+). Its pathway is cofactor biosynthesis; thiamine diphosphate biosynthesis; 4-methyl-5-(2-phosphoethyl)-thiazole from 5-(2-hydroxyethyl)-4-methylthiazole: step 1/1. Its function is as follows. Catalyzes the phosphorylation of the hydroxyl group of 4-methyl-5-beta-hydroxyethylthiazole (THZ). The sequence is that of Hydroxyethylthiazole kinase from Thermoanaerobacter pseudethanolicus (strain ATCC 33223 / 39E) (Clostridium thermohydrosulfuricum).